Consider the following 443-residue polypeptide: Xaa-Pro dipeptidase (443 aa).

Asp246, Asp257, His339, Glu384, and Glu423 together coordinate Mn(2+).

The protein belongs to the peptidase M24B family. Bacterial-type prolidase subfamily. Mn(2+) is required as a cofactor.

The enzyme catalyses Xaa-L-Pro dipeptide + H2O = an L-alpha-amino acid + L-proline. Its function is as follows. Splits dipeptides with a prolyl residue in the C-terminal position. The chain is Xaa-Pro dipeptidase from Enterobacter sp. (strain 638).